Consider the following 260-residue polypeptide: Glutamate racemase (260 aa).

Substrate contacts are provided by residues aspartate 14–serine 15 and tyrosine 46–glycine 47. The active-site Proton donor/acceptor is the cysteine 77. Asparagine 78–threonine 79 is a binding site for substrate. Cysteine 188 acts as the Proton donor/acceptor in catalysis. Threonine 189–histidine 190 provides a ligand contact to substrate.

It belongs to the aspartate/glutamate racemases family.

The catalysed reaction is L-glutamate = D-glutamate. Its pathway is cell wall biogenesis; peptidoglycan biosynthesis. Provides the (R)-glutamate required for cell wall biosynthesis. The polypeptide is Glutamate racemase (Clostridium perfringens (strain ATCC 13124 / DSM 756 / JCM 1290 / NCIMB 6125 / NCTC 8237 / Type A)).